Reading from the N-terminus, the 669-residue chain is Probable L-type lectin-domain containing receptor kinase I.2 (669 aa).

The first 24 residues, 1-24, serve as a signal peptide directing secretion; it reads MAQRFYLLLLLLIFLVNLICFSSQ. At 25–295 the chain is on the extracellular side; that stretch reads QDLSFVFNGF…FTEQKRKRSP (271 aa). Residues 26–266 form a legume-lectin like region; that stretch reads DLSFVFNGFN…NQYILGWSFS (241 aa). Asn132, Asn189, Asn212, and Asn233 each carry an N-linked (GlcNAc...) asparagine glycan. The helical transmembrane segment at 296–316 threads the bilayer; sequence LLIVLLVILTLVVIGGLGGYY. Over 317–669 the chain is Cytoplasmic; that stretch reads LYRRKKYAEV…SHTILNGDGR (353 aa). Residues 351-609 form the Protein kinase domain; the sequence is FNKDGRLGKG…MQYINRDQAL (259 aa). ATP contacts are provided by residues 357 to 365 and Lys379; that span reads LGKGGFGEV. Catalysis depends on Asp475, which acts as the Proton acceptor.

This sequence in the C-terminal section; belongs to the protein kinase superfamily. Ser/Thr protein kinase family. In the N-terminal section; belongs to the leguminous lectin family.

Its subcellular location is the cell membrane. The catalysed reaction is L-seryl-[protein] + ATP = O-phospho-L-seryl-[protein] + ADP + H(+). The enzyme catalyses L-threonyl-[protein] + ATP = O-phospho-L-threonyl-[protein] + ADP + H(+). Its function is as follows. Involved in resistance response to the pathogenic fungus Alternaria brassicicola. This chain is Probable L-type lectin-domain containing receptor kinase I.2, found in Arabidopsis thaliana (Mouse-ear cress).